Consider the following 369-residue polypeptide: uncharacterized protein (369 aa).

An N-terminal signal peptide occupies residues 1–19; that stretch reads MKKLIAVAVLSACGSLAHA.

This is an uncharacterized protein from Haemophilus influenzae (strain ATCC 51907 / DSM 11121 / KW20 / Rd).